Reading from the N-terminus, the 156-residue chain is UPF0262 protein Jann_2882 (156 aa).

Belongs to the UPF0262 family.

The chain is UPF0262 protein Jann_2882 from Jannaschia sp. (strain CCS1).